A 252-amino-acid polypeptide reads, in one-letter code: Adapter protein MecA (252 aa).

The protein belongs to the MecA family. Homodimer.

Functionally, enables the recognition and targeting of unfolded and aggregated proteins to the ClpC protease or to other proteins involved in proteolysis. This Streptococcus uberis (strain ATCC BAA-854 / 0140J) protein is Adapter protein MecA.